Consider the following 128-residue polypeptide: Large ribosomal subunit protein bL12 (128 aa).

It belongs to the bacterial ribosomal protein bL12 family. As to quaternary structure, homodimer. Part of the ribosomal stalk of the 50S ribosomal subunit. Forms a multimeric L10(L12)X complex, where L10 forms an elongated spine to which 2 to 4 L12 dimers bind in a sequential fashion. Binds GTP-bound translation factors.

Functionally, forms part of the ribosomal stalk which helps the ribosome interact with GTP-bound translation factors. Is thus essential for accurate translation. The protein is Large ribosomal subunit protein bL12 of Thermotoga petrophila (strain ATCC BAA-488 / DSM 13995 / JCM 10881 / RKU-1).